The chain runs to 289 residues: Protoheme IX farnesyltransferase (289 aa).

Helical transmembrane passes span Leu-13–Ala-33, Val-40–Phe-60, Ile-85–Leu-105, Leu-111–Phe-131, Asn-139–Gly-159, Ile-168–Leu-188, Ser-212–Pro-232, Met-234–Tyr-254, and Phe-269–Ile-289.

This sequence belongs to the UbiA prenyltransferase family. Protoheme IX farnesyltransferase subfamily.

It localises to the cell inner membrane. The enzyme catalyses heme b + (2E,6E)-farnesyl diphosphate + H2O = Fe(II)-heme o + diphosphate. Its pathway is porphyrin-containing compound metabolism; heme O biosynthesis; heme O from protoheme: step 1/1. Converts heme B (protoheme IX) to heme O by substitution of the vinyl group on carbon 2 of heme B porphyrin ring with a hydroxyethyl farnesyl side group. In Leptospira borgpetersenii serovar Hardjo-bovis (strain JB197), this protein is Protoheme IX farnesyltransferase.